The following is a 1081-amino-acid chain: Isoleucine--tRNA ligase (1081 aa).

Positions proline 53 to asparagine 63 match the 'HIGH' region motif. Positions lysine 607–serine 611 match the 'KMSKS' region motif. Lysine 610 is an ATP binding site.

Belongs to the class-I aminoacyl-tRNA synthetase family.

The enzyme catalyses tRNA(Ile) + L-isoleucine + ATP = L-isoleucyl-tRNA(Ile) + AMP + diphosphate. The protein is Isoleucine--tRNA ligase (ILSA) of Tetrahymena thermophila.